Consider the following 380-residue polypeptide: Cytochrome b (380 aa).

The next 4 helical transmembrane spans lie at 33–53, 77–98, 113–133, and 178–198; these read FGSL…FLAM, WLIR…FLHV, WNMG…GYVL, and FFAF…VHLL. Residues His-83 and His-97 each coordinate heme b. 2 residues coordinate heme b: His-182 and His-196. His-201 lines the a ubiquinone pocket. 4 helical membrane passes run 226–246, 288–308, 320–340, and 347–367; these read IKDF…TLFF, LGGV…PLLH, ITQI…WIGG, and FITI…IFMP.

This sequence belongs to the cytochrome b family. In terms of assembly, the cytochrome bc1 complex contains 11 subunits: 3 respiratory subunits (MT-CYB, CYC1 and UQCRFS1), 2 core proteins (UQCRC1 and UQCRC2) and 6 low-molecular weight proteins (UQCRH/QCR6, UQCRB/QCR7, UQCRQ/QCR8, UQCR10/QCR9, UQCR11/QCR10 and a cleavage product of UQCRFS1). This cytochrome bc1 complex then forms a dimer. Heme b is required as a cofactor.

The protein localises to the mitochondrion inner membrane. Its function is as follows. Component of the ubiquinol-cytochrome c reductase complex (complex III or cytochrome b-c1 complex) that is part of the mitochondrial respiratory chain. The b-c1 complex mediates electron transfer from ubiquinol to cytochrome c. Contributes to the generation of a proton gradient across the mitochondrial membrane that is then used for ATP synthesis. This Microtus oregoni (Creeping vole) protein is Cytochrome b (MT-CYB).